A 165-amino-acid chain; its full sequence is Free methionine-R-sulfoxide reductase (165 aa).

Residues 49–149 (LLEDDTLVLG…LRQLVAQLEK (101 aa)) enclose the GAF domain.

The protein belongs to the free Met sulfoxide reductase family.

The enzyme catalyses [thioredoxin]-disulfide + L-methionine + H2O = L-methionine (R)-S-oxide + [thioredoxin]-dithiol. Functionally, catalyzes the reversible oxidation-reduction of the R-enantiomer of free methionine sulfoxide to methionine. Specific for free L-methionine-(R)-S-oxide. The chain is Free methionine-R-sulfoxide reductase (msrC) from Escherichia coli (strain K12).